The primary structure comprises 584 residues: UvrABC system protein C (584 aa).

One can recognise a GIY-YIG domain in the interval 14–91 (HKPGCYLWKD…IKTHLPKYNI (78 aa)). The 36-residue stretch at 192–227 (DHILMILQTKEQHAVTKLDFENAQKYAEQQKALTSI) folds into the UVR domain.

This sequence belongs to the UvrC family. As to quaternary structure, interacts with UvrB in an incision complex.

The protein localises to the cytoplasm. Functionally, the UvrABC repair system catalyzes the recognition and processing of DNA lesions. UvrC both incises the 5' and 3' sides of the lesion. The N-terminal half is responsible for the 3' incision and the C-terminal half is responsible for the 5' incision. This Ureaplasma parvum serovar 3 (strain ATCC 27815 / 27 / NCTC 11736) protein is UvrABC system protein C.